A 255-amino-acid chain; its full sequence is Flagellar L-ring protein (255 aa).

Positions 1-25 (MRRHSTRKTVARVAVVALAVGVLAG) are cleaved as a signal peptide. A lipid anchor (N-palmitoyl cysteine) is attached at C26. The S-diacylglycerol cysteine moiety is linked to residue C26.

Belongs to the FlgH family. As to quaternary structure, the basal body constitutes a major portion of the flagellar organelle and consists of four rings (L,P,S, and M) mounted on a central rod.

It is found in the cell outer membrane. The protein resides in the bacterial flagellum basal body. Assembles around the rod to form the L-ring and probably protects the motor/basal body from shearing forces during rotation. This chain is Flagellar L-ring protein, found in Rhodospirillum rubrum (strain ATCC 11170 / ATH 1.1.1 / DSM 467 / LMG 4362 / NCIMB 8255 / S1).